A 356-amino-acid chain; its full sequence is Butyrate kinase 2 (356 aa).

This sequence belongs to the acetokinase family. In terms of assembly, homodimer.

It is found in the cytoplasm. It carries out the reaction butanoate + ATP = butanoyl phosphate + ADP. It participates in lipid metabolism; butanoate metabolism. In terms of biological role, catalyzes the conversion of butyryl-CoA through butyryl phosphate to butyrate. The protein is Butyrate kinase 2 (buk2) of Clostridium acetobutylicum (strain ATCC 824 / DSM 792 / JCM 1419 / IAM 19013 / LMG 5710 / NBRC 13948 / NRRL B-527 / VKM B-1787 / 2291 / W).